An 81-amino-acid chain; its full sequence is Omega-conotoxin-like TxMKLT1-0223 (81 aa).

The N-terminal stretch at 1-22 (MKLTCMMIVAVLFLTAWTFVTA) is a signal peptide. A propeptide spanning residues 23 to 52 (VPHSSNALENLYLKARHEMENPEASKLNTR) is cleaved from the precursor. Cystine bridges form between C55-C72, C62-C76, and C71-C80.

This sequence belongs to the conotoxin O1 superfamily. In terms of tissue distribution, expressed by the venom duct.

The protein resides in the secreted. In terms of biological role, omega-conotoxins act at presynaptic membranes, they bind and block voltage-gated calcium channels (Cav). This chain is Omega-conotoxin-like TxMKLT1-0223, found in Conus textile (Cloth-of-gold cone).